The primary structure comprises 282 residues: Phosphate import ATP-binding protein PstB (282 aa).

The segment covering 1–25 (MKALNANISTMSEVSRSATPQSDSP) has biased composition (polar residues). The tract at residues 1 to 26 (MKALNANISTMSEVSRSATPQSDSPA) is disordered. The ABC transporter domain maps to 36–277 (IRIANFNAWY…PQEKRTDDYV (242 aa)). 68–75 (GPSGCGKS) is an ATP binding site.

Belongs to the ABC transporter superfamily. Phosphate importer (TC 3.A.1.7) family. In terms of assembly, the complex is composed of two ATP-binding proteins (PstB), two transmembrane proteins (PstC and PstA) and a solute-binding protein (PstS).

The protein resides in the cell inner membrane. It catalyses the reaction phosphate(out) + ATP + H2O = ADP + 2 phosphate(in) + H(+). Its function is as follows. Part of the ABC transporter complex PstSACB involved in phosphate import. Responsible for energy coupling to the transport system. The polypeptide is Phosphate import ATP-binding protein PstB (Rhodopirellula baltica (strain DSM 10527 / NCIMB 13988 / SH1)).